A 654-amino-acid chain; its full sequence is Protein LYK2 (654 aa).

An N-terminal signal peptide occupies residues 1–25; the sequence is MAVSVSKQYMTSLVVILLFISLSSL. The Extracellular segment spans residues 26 to 241; the sequence is SPTSTSHSCD…PSKKKRSKMK (216 aa). 3 cysteine pairs are disulfide-bonded: C50–C102, C57–C163, and C100–C161. 4 N-linked (GlcNAc...) asparagine glycosylation sites follow: N103, N170, N193, and N204. One copy of the LysM; degenerate repeat lies at 177 to 217; sequence YPVGVRDSVSSLAVRFNTTEDAIVSANNKSGVVPLKPALIP. Positions 218 to 238 are disordered; the sequence is LDHKPEKQGSRKRNPSKKKRS. Residues 227–238 show a composition bias toward basic residues; that stretch reads SRKRNPSKKKRS. Residues 242–262 traverse the membrane as a helical segment; sequence LMIAVSSAIAGVCGLVTLMVF. Topologically, residues 263–654 are cytoplasmic; that stretch reads GYLHWKKETQ…PLVKKSSIID (392 aa). A Protein kinase domain is found at 324 to 619; the sequence is TPRKPVLEIY…EIAERVSRLV (296 aa). Residues 330-338 and K368 contribute to the ATP site; that span reads LEIYAFEEL.

It belongs to the protein kinase superfamily. Ser/Thr protein kinase family.

It is found in the cell membrane. In terms of biological role, may recognize microbe-derived N-acetylglucosamine (NAG)-containing ligands. The sequence is that of Protein LYK2 (LYK2) from Arabidopsis thaliana (Mouse-ear cress).